Reading from the N-terminus, the 208-residue chain is Probable GTP-binding protein EngB (208 aa).

The EngB-type G domain maps to lysine 18–glutamate 187. Residues glycine 26–serine 33, glycine 52–leucine 56, aspartate 69–glycine 72, asparagine 135–aspartate 138, and valine 166–alanine 168 each bind GTP. Mg(2+) contacts are provided by serine 33 and threonine 54.

Belongs to the TRAFAC class TrmE-Era-EngA-EngB-Septin-like GTPase superfamily. EngB GTPase family. Mg(2+) is required as a cofactor.

Necessary for normal cell division and for the maintenance of normal septation. The polypeptide is Probable GTP-binding protein EngB (Ureaplasma urealyticum serovar 10 (strain ATCC 33699 / Western)).